The following is a 279-amino-acid chain: Thermitase (279 aa).

Asp-5 provides a ligand contact to Ca(2+). Residues Gln-12–Val-277 enclose the Peptidase S8 domain. The Charge relay system role is filled by Asp-38. The Ca(2+) site is built by Asp-47, Asp-57, Asp-60, Asp-62, Thr-64, and Gln-66. His-71 serves as the catalytic Charge relay system. Residues Val-82, Asn-85, Thr-87, and Ile-89 each contribute to the Ca(2+) site. Na(+)-binding residues include Ala-173, Tyr-175, and Ala-178. Val-199 and Asp-201 together coordinate Ca(2+). A Na(+)-binding site is contributed by Asp-201. The active-site Charge relay system is the Ser-225.

The protein belongs to the peptidase S8 family. Ca(2+) serves as cofactor. It depends on Na(+) as a cofactor.

Its subcellular location is the secreted. It carries out the reaction Hydrolysis of proteins, including collagen.. The protein is Thermitase of Thermoactinomyces vulgaris.